The chain runs to 71 residues: General transcription and DNA repair factor IIH subunit TFB5 (71 aa).

It belongs to the TFB5 family. As to quaternary structure, component of the 7-subunit TFIIH core complex composed of XPB, XPD, TFB1/GTF2H1, GTF2H2/P44, TFB4/GTF2H3, TFB2/GTF2H4 and TFB5/GTF2H5, which is active in NER. The core complex associates with the 3-subunit CDK-activating kinase (CAK) module composed of CYCH1/cyclin H1, CDKD and MAT1/At4g30820 to form the 10-subunit holoenzyme (holo-TFIIH) active in transcription.

It is found in the nucleus. Functionally, component of the general transcription and DNA repair factor IIH (TFIIH) core complex, which is involved in general and transcription-coupled nucleotide excision repair (NER) of damaged DNA and, when complexed to CAK, in RNA transcription by RNA polymerase II. In NER, TFIIH acts by opening DNA around the lesion to allow the excision of the damaged oligonucleotide and its replacement by a new DNA fragment. In transcription, TFIIH has an essential role in transcription initiation. When the pre-initiation complex (PIC) has been established, TFIIH is required for promoter opening and promoter escape. Phosphorylation of the C-terminal tail (CTD) of the largest subunit of RNA polymerase II by the kinase module CAK controls the initiation of transcription. This Arabidopsis thaliana (Mouse-ear cress) protein is General transcription and DNA repair factor IIH subunit TFB5.